The primary structure comprises 830 residues: Venom phosphodiesterase (830 aa).

SMB domains lie at 7–50 and 51–95; these read PLES…VLPT and QSWS…RETS. 16 cysteine pairs are disulfide-bonded: Cys11/Cys15, Cys11/Cys28, Cys15/Cys46, Cys26/Cys28, Cys26/Cys39, Cys32/Cys38, Cys39/Cys46, Cys55/Cys60, Cys55/Cys72, Cys60/Cys90, Cys70/Cys72, Cys70/Cys83, Cys76/Cys82, Cys83/Cys90, Cys101/Cys147, and Cys109/Cys321. Asn16 carries N-linked (GlcNAc...) asparagine glycosylation. Positions 35 to 37 match the Cell attachment site motif; sequence RKA. Asp124 and Thr162 together coordinate a divalent metal cation. The active-site AMP-threonine intermediate is the Thr162. Asn193, Asn236, and Asn247 each carry an N-linked (GlcNAc...) asparagine glycan. Lys248 is an AMP binding site. A divalent metal cation contacts are provided by Asp282, His286, Asp329, and His330. His286 provides a ligand contact to AMP. Disulfide bonds link Cys337–Cys434, Cys385–Cys772, Cys518–Cys575, Cys531–Cys632, Cys533–Cys617, and Cys740–Cys750. His439 is a binding site for a divalent metal cation. The N-linked (GlcNAc...) asparagine glycan is linked to Asn489. Asn723 and Asn742 each carry an N-linked (GlcNAc...) asparagine glycan.

Belongs to the nucleotide pyrophosphatase/phosphodiesterase family. In terms of assembly, monomer cleaved in two subunits; disulfide-linked. Is synthesized as a single-chain protein and is subsequently cleaved to form a two-subunit protein held together with disulfide bonds. It depends on a divalent metal cation as a cofactor. In terms of tissue distribution, expressed by venom gland.

The protein resides in the secreted. The catalysed reaction is ADP + H2O = AMP + phosphate + H(+). In terms of biological role, hydrolyzes ADP with high activity. Shows weak or no activity on 5'-AMP, 5'-GMP, 3'-AMP, ATP, cAMP, and cGMP. Is devoid of monophosphatase and proteinase activities. Dose-dependently inhibits platelet aggregation induced by ADP and collagen. This is Venom phosphodiesterase from Naja atra (Chinese cobra).